Reading from the N-terminus, the 339-residue chain is Fructose-1,6-bisphosphatase class 1 (339 aa).

Positions 91, 113, 115, and 116 each coordinate Mg(2+). Substrate is bound by residues 116 to 119 (DGSS), N210, and K276. E282 is a binding site for Mg(2+).

This sequence belongs to the FBPase class 1 family. As to quaternary structure, homotetramer. Mg(2+) is required as a cofactor.

It is found in the cytoplasm. It carries out the reaction beta-D-fructose 1,6-bisphosphate + H2O = beta-D-fructose 6-phosphate + phosphate. It functions in the pathway carbohydrate biosynthesis; gluconeogenesis. The chain is Fructose-1,6-bisphosphatase class 1 from Bordetella bronchiseptica (strain ATCC BAA-588 / NCTC 13252 / RB50) (Alcaligenes bronchisepticus).